Reading from the N-terminus, the 429-residue chain is Mannose-6-phosphate isomerase (429 aa).

Positions 110, 112, 137, and 282 each coordinate Zn(2+). Residue Arg-301 is part of the active site.

It belongs to the mannose-6-phosphate isomerase type 1 family. Zn(2+) serves as cofactor.

Its subcellular location is the cytoplasm. The catalysed reaction is D-mannose 6-phosphate = D-fructose 6-phosphate. It participates in nucleotide-sugar biosynthesis; GDP-alpha-D-mannose biosynthesis; alpha-D-mannose 1-phosphate from D-fructose 6-phosphate: step 1/2. Involved in the synthesis of the GDP-mannose and dolichol-phosphate-mannose required for a number of critical mannosyl transfer reactions. In Candida glabrata (strain ATCC 2001 / BCRC 20586 / JCM 3761 / NBRC 0622 / NRRL Y-65 / CBS 138) (Yeast), this protein is Mannose-6-phosphate isomerase (PMI1).